An 85-amino-acid chain; its full sequence is Large ribosomal subunit protein bL27 (85 aa).

The protein belongs to the bacterial ribosomal protein bL27 family.

This is Large ribosomal subunit protein bL27 from Leptospira biflexa serovar Patoc (strain Patoc 1 / Ames).